The sequence spans 232 residues: Pseudaminic acid cytidylyltransferase (232 aa).

The protein belongs to the CMP-NeuNAc synthase family. It depends on Mg(2+) as a cofactor.

It carries out the reaction pseudaminate + CTP = CMP-pseudaminate + diphosphate. Functionally, catalyzes the final step in the biosynthesis of pseudaminic acid, a sialic-acid-like sugar that is used to modify flagellin. Mediates the activation of pseudaminic acid with CMP by forming CMP-pseudaminic acid. The polypeptide is Pseudaminic acid cytidylyltransferase (pseF) (Campylobacter jejuni subsp. jejuni serotype O:2 (strain ATCC 700819 / NCTC 11168)).